The chain runs to 474 residues: Gamma-aminobutyric acid receptor subunit beta-1 (474 aa).

An N-terminal signal peptide occupies residues 1-25; the sequence is MWTVQNRESLGLLSFPVMVAMVCCA. The Extracellular portion of the chain corresponds to 26 to 245; the sequence is HSSNEPSNMS…SFRLKRNIGY (220 aa). N-linked (GlcNAc...) asparagine glycans are attached at residues N33 and N105. Y122 is a histamine binding site. A disulfide bridge connects residues C161 and C175. Residue N174 is glycosylated (N-linked (GlcNAc...) asparagine). Residues 181-182 and T227 each bind histamine; that span reads SY. 2 residues coordinate 4-aminobutanoate: Y182 and T227. Helical transmembrane passes span 246–267, 271–293, and 305–327; these read FILQ…SFWI, ASAA…STHL, and AIDI…YAFV. The Cytoplasmic segment spans residues 328–451; the sequence is NYIFFGKGPQ…DLTDVNSIDK (124 aa). Residues 452–473 traverse the membrane as a helical segment; that stretch reads WSRMFFPITFSLFNVVYWLYYV.

This sequence belongs to the ligand-gated ion channel (TC 1.A.9) family. Gamma-aminobutyric acid receptor (TC 1.A.9.5) subfamily. GABRB1 sub-subfamily. As to quaternary structure, heteropentamer, formed by a combination of alpha (GABRA1-6), beta (GABRB1-3), gamma (GABRG1-3), delta (GABRD), epsilon (GABRE), rho (GABRR1-3), pi (GABRP) and theta (GABRQ) chains, each subunit exhibiting distinct physiological and pharmacological properties. Binds UBQLN1.

It is found in the postsynaptic cell membrane. It localises to the cell membrane. The catalysed reaction is chloride(in) = chloride(out). With respect to regulation, potentiated by histamine. In terms of biological role, beta subunit of the heteropentameric ligand-gated chloride channel gated by gamma-aminobutyric acid (GABA), a major inhibitory neurotransmitter in the brain. GABA-gated chloride channels, also named GABA(A) receptors (GABAAR), consist of five subunits arranged around a central pore and contain GABA active binding site(s) located at the alpha and beta subunit interface(s). When activated by GABA, GABAARs selectively allow the flow of chloride anions across the cell membrane down their electrochemical gradient. Chloride influx into the postsynaptic neuron following GABAAR opening decreases the neuron ability to generate a new action potential, thereby reducing nerve transmission. Beta-containing GABAARs can simultaneously bind GABA and histamine where histamine binds at the interface of two neighboring beta subunits, which may be involved in the regulation of sleep and wakefulness. The protein is Gamma-aminobutyric acid receptor subunit beta-1 of Mus musculus (Mouse).